Consider the following 476-residue polypeptide: Vitamin D-binding protein (476 aa).

The first 16 residues, 1 to 16, serve as a signal peptide directing secretion; the sequence is MKRVLLLLLAVVCGHA. 3 consecutive Albumin domains span residues 17–208, 209–394, and 395–476; these read LERG…QIKH, LSLL…VLKK, and EVSS…LPEP. Disulfide bonds link Cys-29/Cys-75 and Cys-74/Cys-83. N-linked (GlcNAc...) asparagine glycosylation occurs at Asn-86. 12 disulfide bridges follow: Cys-96–Cys-112, Cys-111–Cys-122, Cys-145–Cys-190, Cys-189–Cys-198, Cys-220–Cys-266, Cys-265–Cys-273, Cys-286–Cys-300, Cys-299–Cys-311, Cys-335–Cys-376, Cys-375–Cys-384, Cys-407–Cys-453, and Cys-452–Cys-462.

This sequence belongs to the ALB/AFP/VDB family. Associates with membrane-bound immunoglobulin on the surface of B-lymphocytes and with IgG Fc receptor on the membranes of T-lymphocytes. Interacts with LRP2; the interaction is required for renal uptake of GC in complex with 25-hydroxyvitamin D3.

It localises to the secreted. Its function is as follows. Involved in vitamin D transport and storage, scavenging of extracellular G-actin, enhancement of the chemotactic activity of C5 alpha for neutrophils in inflammation and macrophage activation. This chain is Vitamin D-binding protein (GC), found in Oryctolagus cuniculus (Rabbit).